The primary structure comprises 629 residues: MKFYITTPIYYVNSEPHIGSAYTTIVADIIARYKRFMGYDVFFLTGTDEHGQKVLQAAQQAGKDPQEFCDELAEKFKRLWKELKITNDYFIRTTDEMHMKTVQEFVAKMKENGDVYKGIYKGWYCVPCETFWNEDEVIKEGEERFCPECKRPVKWVEEENYFFRLSKYRDSLLKYYEEHPDFVEPDFRRNEMLKILEGGLKDLSITRTTFKWGVPMKDDPEHVIYVWVDALINYISAIGYGWNDEMFNKWWPADLHLIGKEINRFHSIIWPAMLMSVGLPLPKKVFAHGWLTVNGQKISKSLGNAIDPRFFVKRYGNDVVRYYLIRDIMFGKDGDFSEERLVHRLNSDLANDYGNLLHRITAMIKKYFNGRLPSPSAQEGFDSWLKERFFETKDAYHELMDSYRLTEALDKIWEFIADVNKYFNDTKPWILGKEGNMERLGTVLYNSLEAVFKVALMTLPVMPDTSEEVFRRVSFEEKPSKEHLENWGVLKPGSTVIHGEPLFKKIDAKDFKKVVETVSAEQNAITIDDFSKVDLRIAKVLEAEKVPNSRKLLRLIIDLGTEKRQIVAGIAEHYRPEELVGKLIVVVANLKPAKLMGIESQGMLLAAKSGDTLRLLTVDGEITPGAKVS.

The 'HIGH' region signature appears at 10 to 20 (YYVNSEPHIGS). Zn(2+) contacts are provided by cysteine 125, cysteine 128, cysteine 146, and cysteine 149. The 'KMSKS' region signature appears at 297–301 (KISKS). Position 300 (lysine 300) interacts with ATP. The tRNA-binding domain maps to 529–629 (DFSKVDLRIA…GEITPGAKVS (101 aa)).

The protein belongs to the class-I aminoacyl-tRNA synthetase family. MetG type 2A subfamily. Homodimer. Zn(2+) serves as cofactor.

It localises to the cytoplasm. It carries out the reaction tRNA(Met) + L-methionine + ATP = L-methionyl-tRNA(Met) + AMP + diphosphate. Functionally, is required not only for elongation of protein synthesis but also for the initiation of all mRNA translation through initiator tRNA(fMet) aminoacylation. The polypeptide is Methionine--tRNA ligase (metG) (Thermotoga maritima (strain ATCC 43589 / DSM 3109 / JCM 10099 / NBRC 100826 / MSB8)).